Here is a 654-residue protein sequence, read N- to C-terminus: Myrosinase-binding protein 2 (654 aa).

4 consecutive Jacalin-type lectin domains span residues 2–151, 156–291, 346–489, and 502–645; these read SEKV…HFFA, LKHF…HFAP, PNKV…YFAP, and AKKL…HAVP. Residues 314–346 show a composition bias toward pro residues; the sequence is VPAPSPAPAPSPAPAPAPAPAPAPTPAPAPAPP. Positions 314 to 355 are disordered; that stretch reads VPAPSPAPAPSPAPAPAPAPAPAPTPAPAPAPPNKVEALGGN.

The protein belongs to the jacalin lectin family. Expressed in flowers. Detected mainly in ovules and styles of immature flowers, but also in pistils, styles, stamens, petals and embryos. Not detected in leaves.

This is Myrosinase-binding protein 2 (MBP2) from Arabidopsis thaliana (Mouse-ear cress).